The sequence spans 278 residues: Putative carbamate hydrolase RutD (278 aa).

It belongs to the AB hydrolase superfamily. Hydrolase RutD family.

The enzyme catalyses carbamate + 2 H(+) = NH4(+) + CO2. In terms of biological role, involved in pyrimidine catabolism. May facilitate the hydrolysis of carbamate, a reaction that can also occur spontaneously. This is Putative carbamate hydrolase RutD from Yersinia enterocolitica serotype O:8 / biotype 1B (strain NCTC 13174 / 8081).